The following is a 232-amino-acid chain: Cobalt transport protein CbiM (232 aa).

6 helical membrane-spanning segments follow: residues 6 to 26 (GFLP…FVVH), 43 to 63 (LLLG…LPSV), 84 to 104 (IMAV…AHGG), 107 to 127 (TLGA…YGVY), 135 to 155 (VPLM…TYCV), and 181 to 201 (IFAV…VIVM).

Belongs to the CbiM family. As to quaternary structure, forms an energy-coupling factor (ECF) transporter complex composed of an ATP-binding protein (A component, CbiO), a transmembrane protein (T component, CbiQ) and 2 possible substrate-capture proteins (S components, CbiM and CbiN) of unknown stoichimetry.

Its subcellular location is the cell membrane. It participates in cofactor biosynthesis; adenosylcobalamin biosynthesis. Part of the energy-coupling factor (ECF) transporter complex CbiMNOQ involved in cobalt import. The polypeptide is Cobalt transport protein CbiM (Streptomyces coelicolor (strain ATCC BAA-471 / A3(2) / M145)).